A 338-amino-acid chain; its full sequence is MELPILPTSVIGSYPKPRWLLRMYKLRELGKIPEEDFKEAVRDASISVLREHERAGIDIPWDGEMGRSEMTEYFTSKIKGFKFYGPVRVWGNAYFNKAAAVDKLEYEEPLVLDEFLWVKENTTREIVKIPITGPYTIAEWSFNEYYPDKESFVMDLAEIINKELKVLEKHGAKFVQLDEPAMLNHPSEVPLAVDAINRAVKGIKMKVGLHVCYSNYNLLADYFDEIKVTQFALEFANRNFRDMDFLKKLSNKELGFGVVDVHNPRVESVEEIRQAIKKVFTYLEPEWVYINPDCGLKLLDRKIAYQKLVNMVQAVRGVRKELEKEGKTTIEFRTLKDI.

Residues His-210, Cys-212, Glu-234, and Cys-294 each contribute to the Zn(2+) site.

Belongs to the archaeal MetE family. Requires Zn(2+) as cofactor.

Its pathway is amino-acid biosynthesis; L-methionine biosynthesis via de novo pathway. Catalyzes the transfer of a methyl group to L-homocysteine resulting in methionine formation. The physiological methyl donor is unknown. This is Methionine synthase from Pyrococcus furiosus (strain ATCC 43587 / DSM 3638 / JCM 8422 / Vc1).